The chain runs to 122 residues: UPF0102 protein Cgl2031/cg2228 (122 aa).

It belongs to the UPF0102 family.

The chain is UPF0102 protein Cgl2031/cg2228 from Corynebacterium glutamicum (strain ATCC 13032 / DSM 20300 / JCM 1318 / BCRC 11384 / CCUG 27702 / LMG 3730 / NBRC 12168 / NCIMB 10025 / NRRL B-2784 / 534).